A 375-amino-acid polypeptide reads, in one-letter code: Growth/differentiation factor 8 (375 aa).

The N-terminal stretch at 1–18 is a signal peptide; sequence MQKLQIFVYIYLFVLIVA. Positions 19 to 266 are excised as a propeptide; sequence GPVDLNENSE…VTDTPKRSRR (248 aa). 2 N-linked (GlcNAc...) asparagine glycosylation sites follow: asparagine 48 and asparagine 71. Disulfide bonds link cysteine 272/cysteine 282, cysteine 281/cysteine 340, cysteine 309/cysteine 372, and cysteine 313/cysteine 374.

This sequence belongs to the TGF-beta family. In terms of assembly, homodimer; disulfide-linked. Interacts with WFIKKN2, leading to inhibit its activity. Interacts with FSTL3. In terms of processing, synthesized as large precursor molecule that undergoes proteolytic cleavage to generate an N-terminal propeptide and a disulfide linked C-terminal dimer, which is the biologically active molecule. The circulating form consists of a latent complex of the C-terminal dimer and other proteins, including its propeptide, which maintain the C-terminal dimer in a latent, inactive state. Ligand activation requires additional cleavage of the prodomain by a tolloid-like metalloproteinase.

The protein resides in the secreted. Its function is as follows. Acts specifically as a negative regulator of skeletal muscle growth. The sequence is that of Growth/differentiation factor 8 (MSTN) from Aepyceros melampus (Impala).